We begin with the raw amino-acid sequence, 311 residues long: Malate dehydrogenase (311 aa).

Residues 7–13 and aspartate 34 each bind NAD(+); that span reads GAAGGIG. The substrate site is built by arginine 81 and arginine 87. NAD(+)-binding positions include asparagine 94 and 117-119; that span reads ITN. 2 residues coordinate substrate: asparagine 119 and arginine 153. The active-site Proton acceptor is histidine 177. An NAD(+)-binding site is contributed by methionine 227.

It belongs to the LDH/MDH superfamily. MDH type 1 family. In terms of assembly, homodimer.

It catalyses the reaction (S)-malate + NAD(+) = oxaloacetate + NADH + H(+). Its function is as follows. Catalyzes the reversible oxidation of malate to oxaloacetate. This is Malate dehydrogenase from Aliivibrio salmonicida (strain LFI1238) (Vibrio salmonicida (strain LFI1238)).